The following is a 276-amino-acid chain: NADPH-dependent 7-cyano-7-deazaguanine reductase (276 aa).

83–85 (IES) contacts substrate. An NADPH-binding site is contributed by 85-86 (SK). The active-site Thioimide intermediate is the C184. The active-site Proton donor is D191. 223-224 (HE) contacts substrate. Residue 252 to 253 (RG) participates in NADPH binding.

Belongs to the GTP cyclohydrolase I family. QueF type 2 subfamily. In terms of assembly, homodimer.

It localises to the cytoplasm. The enzyme catalyses 7-aminomethyl-7-carbaguanine + 2 NADP(+) = 7-cyano-7-deazaguanine + 2 NADPH + 3 H(+). The protein operates within tRNA modification; tRNA-queuosine biosynthesis. Catalyzes the NADPH-dependent reduction of 7-cyano-7-deazaguanine (preQ0) to 7-aminomethyl-7-deazaguanine (preQ1). The sequence is that of NADPH-dependent 7-cyano-7-deazaguanine reductase from Pseudomonas putida (strain W619).